The chain runs to 301 residues: Phosphoribosylaminoimidazole-succinocarboxamide synthase (301 aa).

This sequence belongs to the SAICAR synthetase family.

It carries out the reaction 5-amino-1-(5-phospho-D-ribosyl)imidazole-4-carboxylate + L-aspartate + ATP = (2S)-2-[5-amino-1-(5-phospho-beta-D-ribosyl)imidazole-4-carboxamido]succinate + ADP + phosphate + 2 H(+). Its pathway is purine metabolism; IMP biosynthesis via de novo pathway; 5-amino-1-(5-phospho-D-ribosyl)imidazole-4-carboxamide from 5-amino-1-(5-phospho-D-ribosyl)imidazole-4-carboxylate: step 1/2. The sequence is that of Phosphoribosylaminoimidazole-succinocarboxamide synthase from Syntrophobacter fumaroxidans (strain DSM 10017 / MPOB).